Reading from the N-terminus, the 310-residue chain is Glycerol-3-phosphate dehydrogenase [NAD(P)+] (310 aa).

NADPH is bound by residues tryptophan 14, arginine 34, arginine 35, and lysine 82. Residues lysine 82 and glycine 110 each contribute to the sn-glycerol 3-phosphate site. Serine 114 serves as a coordination point for NADPH. Sn-glycerol 3-phosphate contacts are provided by lysine 165, aspartate 218, serine 228, arginine 229, and asparagine 230. Residue lysine 165 is the Proton acceptor of the active site. Arginine 229 is an NADPH binding site. Position 255 (glutamate 255) interacts with NADPH.

Belongs to the NAD-dependent glycerol-3-phosphate dehydrogenase family.

The protein localises to the cytoplasm. It carries out the reaction sn-glycerol 3-phosphate + NAD(+) = dihydroxyacetone phosphate + NADH + H(+). The enzyme catalyses sn-glycerol 3-phosphate + NADP(+) = dihydroxyacetone phosphate + NADPH + H(+). It functions in the pathway membrane lipid metabolism; glycerophospholipid metabolism. Catalyzes the reduction of the glycolytic intermediate dihydroxyacetone phosphate (DHAP) to sn-glycerol 3-phosphate (G3P), the key precursor for phospholipid synthesis. The sequence is that of Glycerol-3-phosphate dehydrogenase [NAD(P)+] from Acaryochloris marina (strain MBIC 11017).